Here is a 327-residue protein sequence, read N- to C-terminus: GTPase Obg (327 aa).

One can recognise an Obg domain in the interval 2–160 (HTFKDSLNIT…LDLRLELVLI (159 aa)). One can recognise an OBG-type G domain in the interval 161 to 326 (ADIGLVGLPN…LVNELFALSR (166 aa)). Residues 167–174 (GLPNAGKS), 192–196 (FTTKV), 213–216 (DVPG), 280–283 (NKLD), and 307–309 (SIY) each bind GTP. Mg(2+) contacts are provided by S174 and T194.

It belongs to the TRAFAC class OBG-HflX-like GTPase superfamily. OBG GTPase family. Monomer. The cofactor is Mg(2+).

The protein resides in the cytoplasm. An essential GTPase which binds GTP, GDP and possibly (p)ppGpp with moderate affinity, with high nucleotide exchange rates and a fairly low GTP hydrolysis rate. Plays a role in control of the cell cycle, stress response, ribosome biogenesis and in those bacteria that undergo differentiation, in morphogenesis control. The sequence is that of GTPase Obg from Borrelia turicatae (strain 91E135).